The chain runs to 406 residues: Glutamyl-tRNA(Gln) amidotransferase subunit D (406 aa).

Residues 68–390 form the Asparaginase/glutaminase domain; the sequence is KSISILATGG…EEFINVFNRN (323 aa). Catalysis depends on residues threonine 78, threonine 152, aspartate 153, and lysine 230.

It belongs to the asparaginase 1 family. GatD subfamily. As to quaternary structure, heterodimer of GatD and GatE.

The catalysed reaction is L-glutamyl-tRNA(Gln) + L-glutamine + ATP + H2O = L-glutaminyl-tRNA(Gln) + L-glutamate + ADP + phosphate + H(+). In terms of biological role, allows the formation of correctly charged Gln-tRNA(Gln) through the transamidation of misacylated Glu-tRNA(Gln) in organisms which lack glutaminyl-tRNA synthetase. The reaction takes place in the presence of glutamine and ATP through an activated gamma-phospho-Glu-tRNA(Gln). The GatDE system is specific for glutamate and does not act on aspartate. This is Glutamyl-tRNA(Gln) amidotransferase subunit D from Thermoplasma volcanium (strain ATCC 51530 / DSM 4299 / JCM 9571 / NBRC 15438 / GSS1).